Here is a 359-residue protein sequence, read N- to C-terminus: UDP-N-acetylglucosamine--N-acetylmuramyl-(pentapeptide) pyrophosphoryl-undecaprenol N-acetylglucosamine transferase (359 aa).

Residues 13–15 (TAG), N125, R161, S193, I241, and Q285 each bind UDP-N-acetyl-alpha-D-glucosamine.

The protein belongs to the glycosyltransferase 28 family. MurG subfamily.

It localises to the cell membrane. It catalyses the reaction di-trans,octa-cis-undecaprenyl diphospho-N-acetyl-alpha-D-muramoyl-L-alanyl-D-glutamyl-meso-2,6-diaminopimeloyl-D-alanyl-D-alanine + UDP-N-acetyl-alpha-D-glucosamine = di-trans,octa-cis-undecaprenyl diphospho-[N-acetyl-alpha-D-glucosaminyl-(1-&gt;4)]-N-acetyl-alpha-D-muramoyl-L-alanyl-D-glutamyl-meso-2,6-diaminopimeloyl-D-alanyl-D-alanine + UDP + H(+). Its pathway is cell wall biogenesis; peptidoglycan biosynthesis. Its function is as follows. Cell wall formation. Catalyzes the transfer of a GlcNAc subunit on undecaprenyl-pyrophosphoryl-MurNAc-pentapeptide (lipid intermediate I) to form undecaprenyl-pyrophosphoryl-MurNAc-(pentapeptide)GlcNAc (lipid intermediate II). The sequence is that of UDP-N-acetylglucosamine--N-acetylmuramyl-(pentapeptide) pyrophosphoryl-undecaprenol N-acetylglucosamine transferase from Corynebacterium diphtheriae (strain ATCC 700971 / NCTC 13129 / Biotype gravis).